Consider the following 148-residue polypeptide: SsrA-binding protein (148 aa).

The span at 129–142 shows a compositional bias: basic and acidic residues; sequence ETEKKRDWEREKAR. A disordered region spans residues 129 to 148; the sequence is ETEKKRDWEREKARIMRAGT.

The protein belongs to the SmpB family.

The protein localises to the cytoplasm. Required for rescue of stalled ribosomes mediated by trans-translation. Binds to transfer-messenger RNA (tmRNA), required for stable association of tmRNA with ribosomes. tmRNA and SmpB together mimic tRNA shape, replacing the anticodon stem-loop with SmpB. tmRNA is encoded by the ssrA gene; the 2 termini fold to resemble tRNA(Ala) and it encodes a 'tag peptide', a short internal open reading frame. During trans-translation Ala-aminoacylated tmRNA acts like a tRNA, entering the A-site of stalled ribosomes, displacing the stalled mRNA. The ribosome then switches to translate the ORF on the tmRNA; the nascent peptide is terminated with the 'tag peptide' encoded by the tmRNA and targeted for degradation. The ribosome is freed to recommence translation, which seems to be the essential function of trans-translation. The chain is SsrA-binding protein from Burkholderia orbicola (strain AU 1054).